The primary structure comprises 202 residues: Holliday junction branch migration complex subunit RuvA (202 aa).

The domain I stretch occupies residues 1 to 64 (MIDFLKGRLV…ETALEMFGFS (64 aa)). Residues 65–143 (SELDRTAFLL…KQQVAVSAEL (79 aa)) are domain II. The interval 144–152 (PASDGVPVL) is flexible linker. Positions 152-202 (LAGRAENEALAALISLGYTPREAREALNRLPDRKLDAAGLVHAALRIMGSQ) are domain III.

This sequence belongs to the RuvA family. Homotetramer. Forms an RuvA(8)-RuvB(12)-Holliday junction (HJ) complex. HJ DNA is sandwiched between 2 RuvA tetramers; dsDNA enters through RuvA and exits via RuvB. An RuvB hexamer assembles on each DNA strand where it exits the tetramer. Each RuvB hexamer is contacted by two RuvA subunits (via domain III) on 2 adjacent RuvB subunits; this complex drives branch migration. In the full resolvosome a probable DNA-RuvA(4)-RuvB(12)-RuvC(2) complex forms which resolves the HJ.

It is found in the cytoplasm. The RuvA-RuvB-RuvC complex processes Holliday junction (HJ) DNA during genetic recombination and DNA repair, while the RuvA-RuvB complex plays an important role in the rescue of blocked DNA replication forks via replication fork reversal (RFR). RuvA specifically binds to HJ cruciform DNA, conferring on it an open structure. The RuvB hexamer acts as an ATP-dependent pump, pulling dsDNA into and through the RuvAB complex. HJ branch migration allows RuvC to scan DNA until it finds its consensus sequence, where it cleaves and resolves the cruciform DNA. The polypeptide is Holliday junction branch migration complex subunit RuvA (Desulforudis audaxviator (strain MP104C)).